Here is a 177-residue protein sequence, read N- to C-terminus: Large ribosomal subunit protein uL6 (177 aa).

This sequence belongs to the universal ribosomal protein uL6 family. Part of the 50S ribosomal subunit.

This protein binds to the 23S rRNA, and is important in its secondary structure. It is located near the subunit interface in the base of the L7/L12 stalk, and near the tRNA binding site of the peptidyltransferase center. This Variovorax paradoxus (strain S110) protein is Large ribosomal subunit protein uL6.